We begin with the raw amino-acid sequence, 273 residues long: Cell division cycle-associated protein 3 (273 aa).

2 disordered regions span residues methionine 1–glutamate 231 and glycine 251–serine 273. Residues serine 29 and serine 31 each carry the phosphoserine modification. A compositionally biased stretch (polar residues) spans alanine 32–proline 45. The residue at position 37 (threonine 37) is a Phosphothreonine. Residues serine 44 and serine 67 each carry the phosphoserine modification. Threonine 75 is modified (phosphothreonine). Residues lysine 90–serine 124 are F-box-like. The residue at position 93 (serine 93) is a Phosphoserine. The span at glutamate 94 to valine 105 shows a compositional bias: acidic residues. 2 stretches are compositionally biased toward polar residues: residues proline 144–glutamine 154 and serine 164–aspartate 175. Serine 204 is modified (phosphoserine). Threonine 207 is modified (phosphothreonine). The segment covering glutamine 210–leucine 220 has biased composition (polar residues). Serine 214 is modified (phosphoserine). At threonine 217 the chain carries Phosphothreonine. Positions lysine 263–asparagine 265 match the KEN box motif.

In terms of assembly, interacts with SKP1. Part of a SCF (SKP1-cullin-F-box) protein ligase complex. Post-translationally, ubiquitinated and degraded by the APC/C-Cdh1 complex.

It is found in the cytoplasm. The protein resides in the cytosol. It participates in protein modification; protein ubiquitination. In terms of biological role, F-box-like protein which is required for entry into mitosis. Acts by participating in E3 ligase complexes that mediate the ubiquitination and degradation of WEE1 kinase at G2/M phase. This Rattus norvegicus (Rat) protein is Cell division cycle-associated protein 3 (Cdca3).